The chain runs to 100 residues: Glutamyl-tRNA(Gln) amidotransferase subunit C (100 aa).

This sequence belongs to the GatC family. In terms of assembly, heterotrimer of A, B and C subunits.

It catalyses the reaction L-glutamyl-tRNA(Gln) + L-glutamine + ATP + H2O = L-glutaminyl-tRNA(Gln) + L-glutamate + ADP + phosphate + H(+). It carries out the reaction L-aspartyl-tRNA(Asn) + L-glutamine + ATP + H2O = L-asparaginyl-tRNA(Asn) + L-glutamate + ADP + phosphate + 2 H(+). Its function is as follows. Allows the formation of correctly charged Asn-tRNA(Asn) or Gln-tRNA(Gln) through the transamidation of misacylated Asp-tRNA(Asn) or Glu-tRNA(Gln) in organisms which lack either or both of asparaginyl-tRNA or glutaminyl-tRNA synthetases. The reaction takes place in the presence of glutamine and ATP through an activated phospho-Asp-tRNA(Asn) or phospho-Glu-tRNA(Gln). In Rickettsia conorii (strain ATCC VR-613 / Malish 7), this protein is Glutamyl-tRNA(Gln) amidotransferase subunit C.